A 161-amino-acid polypeptide reads, in one-letter code: Nucleotide-binding protein Rfer_2692 (161 aa).

Belongs to the YajQ family.

Functionally, nucleotide-binding protein. This chain is Nucleotide-binding protein Rfer_2692, found in Albidiferax ferrireducens (strain ATCC BAA-621 / DSM 15236 / T118) (Rhodoferax ferrireducens).